The chain runs to 444 residues: UDP-N-acetylmuramate--L-alanine ligase (444 aa).

Residue 110–116 (GAHGKTS) participates in ATP binding.

The protein belongs to the MurCDEF family.

Its subcellular location is the cytoplasm. The catalysed reaction is UDP-N-acetyl-alpha-D-muramate + L-alanine + ATP = UDP-N-acetyl-alpha-D-muramoyl-L-alanine + ADP + phosphate + H(+). It functions in the pathway cell wall biogenesis; peptidoglycan biosynthesis. Its function is as follows. Cell wall formation. This is UDP-N-acetylmuramate--L-alanine ligase from Streptococcus pneumoniae (strain ATCC 700669 / Spain 23F-1).